A 338-amino-acid polypeptide reads, in one-letter code: Ketol-acid reductoisomerase (NADP(+)) (338 aa).

The KARI N-terminal Rossmann domain occupies 1–181; that stretch reads MKVFYDKDCD…GGGRTGIIET (181 aa). NADP(+) is bound by residues 24–27, Arg-47, Ser-50, Thr-52, and 82–85; these read YGSQ and DEFQ. His-107 is an active-site residue. Gly-133 serves as a coordination point for NADP(+). Residues 182-327 form the KARI C-terminal knotted domain; that stretch reads TFKDETETDL…EQLRSMMPWI (146 aa). Asp-190, Glu-194, Glu-226, and Glu-230 together coordinate Mg(2+). Ser-251 lines the substrate pocket.

Belongs to the ketol-acid reductoisomerase family. The cofactor is Mg(2+).

The catalysed reaction is (2R)-2,3-dihydroxy-3-methylbutanoate + NADP(+) = (2S)-2-acetolactate + NADPH + H(+). The enzyme catalyses (2R,3R)-2,3-dihydroxy-3-methylpentanoate + NADP(+) = (S)-2-ethyl-2-hydroxy-3-oxobutanoate + NADPH + H(+). Its pathway is amino-acid biosynthesis; L-isoleucine biosynthesis; L-isoleucine from 2-oxobutanoate: step 2/4. It participates in amino-acid biosynthesis; L-valine biosynthesis; L-valine from pyruvate: step 2/4. In terms of biological role, involved in the biosynthesis of branched-chain amino acids (BCAA). Catalyzes an alkyl-migration followed by a ketol-acid reduction of (S)-2-acetolactate (S2AL) to yield (R)-2,3-dihydroxy-isovalerate. In the isomerase reaction, S2AL is rearranged via a Mg-dependent methyl migration to produce 3-hydroxy-3-methyl-2-ketobutyrate (HMKB). In the reductase reaction, this 2-ketoacid undergoes a metal-dependent reduction by NADPH to yield (R)-2,3-dihydroxy-isovalerate. This chain is Ketol-acid reductoisomerase (NADP(+)), found in Pseudomonas entomophila (strain L48).